The primary structure comprises 528 residues: Movement protein TGB1 (528 aa).

Positions 1–13 (MDMTKTVEEKKTN) are enriched in basic and acidic residues. Positions 1-143 (MDMTKTVEEK…TKGSSQVGEN (143 aa)) are disordered. 2 tandem repeats follow at residues 52-77 (VADQ…QVPG) and 78-103 (VADQ…QVPG). The segment at 52–103 (VADQTPLSVDNGAKSKLDSSDRQVPGVADQTPLSVDNGAKSKLDSSDRQVPG) is 2 X 26 AA tandem repeats. An interaction with the suppressor of RNA silencing Gamma-B region spans residues 75–491 (VPGVADQTPL…KSKLIIRADA (417 aa)). Residues 109-119 (NVKKSKKKRIQ) show a composition bias toward basic residues. A nucleolar localization signal region spans residues 111–120 (KKSKKKRIQK). The region spanning 236–379 (ARACTLERER…YLTLPVIYRS (144 aa)) is the (+)RNA virus helicase ATP-binding domain. Positions 243–254 (RERLKRKLLLVR) are nuclear localization signal. 269 to 276 (GVPGSGKS) contributes to the ATP binding site. In terms of domain architecture, (+)RNA virus helicase C-terminal spans 380–520 (ETTYRLGQET…SHRYSAKPDE (141 aa)). The tract at residues 508–528 (ASNSHRYSAKPDEDHSWFKAK) is disordered. A compositionally biased stretch (basic and acidic residues) spans 516 to 528 (AKPDEDHSWFKAK).

It belongs to the virgaviridae/benyvirus TGB1 movement protein family. In terms of assembly, homooligomer. Interacts with movement protein TGB3. TGB1-TGB3-TGB2 complex formation is enhanced by ATP hydrolysis. Interacts with the suppressor of RNA silencing Gamma-B (via N-terminus). Mg(2+) is required as a cofactor.

It is found in the host cell junction. It localises to the host plasmodesma. Its subcellular location is the host nucleus. The protein localises to the host cytoplasm. The protein resides in the host nucleolus. It is found in the host cytoskeleton. The enzyme catalyses ATP + H2O = ADP + phosphate + H(+). With respect to regulation, ATPase activity is enhanced by the suppressor of RNA silencing Gamma-B. In terms of biological role, participates in the transport of viral genome to neighboring plant cells directly through plasmodesmata, without any budding. Multifunctional movement protein with RNA-binding, ATPase and helicase activities. Engages in homologous interactions leading to the formation of a ribonucleoprotein complex containing plus-sense viral RNAs (vRNPs). ATPase activity is probably required for vRNPs movement complex assembly. Intracellular delivery of TGBp1-containing vRNPs to plasmodesmata is facilitated by TGBp2 and TGBp3. This chain is Movement protein TGB1, found in Barley stripe mosaic virus (BSMV).